Consider the following 232-residue polypeptide: Malate dehydrogenase (232 aa).

D4 contributes to the NAD(+) binding site. Residues R51 and R57 each contribute to the substrate site. Residues N64 and 87–89 each bind NAD(+); that span reads ITN. Substrate is bound by residues N89 and R123. Catalysis depends on H147, which acts as the Proton acceptor. M197 is a binding site for NAD(+).

This sequence belongs to the LDH/MDH superfamily. MDH type 1 family. As to quaternary structure, homodimer.

The catalysed reaction is (S)-malate + NAD(+) = oxaloacetate + NADH + H(+). Functionally, catalyzes the reversible oxidation of malate to oxaloacetate. This chain is Malate dehydrogenase (mdh), found in Klebsiella variicola.